The sequence spans 474 residues: Ribulose bisphosphate carboxylase large chain (474 aa).

N122 and T172 together coordinate substrate. K174 acts as the Proton acceptor in catalysis. K176 contributes to the substrate binding site. Residues K200, D202, and E203 each coordinate Mg(2+). K200 is subject to N6-carboxylysine. The active-site Proton acceptor is H293. The substrate site is built by R294, H326, and S378.

The protein belongs to the RuBisCO large chain family. Type I subfamily. As to quaternary structure, heterohexadecamer of 8 large chains and 8 small chains; disulfide-linked. The disulfide link is formed within the large subunit homodimers. It depends on Mg(2+) as a cofactor. In terms of processing, the disulfide bond which can form in the large chain dimeric partners within the hexadecamer appears to be associated with oxidative stress and protein turnover.

The protein resides in the carboxysome. The catalysed reaction is 2 (2R)-3-phosphoglycerate + 2 H(+) = D-ribulose 1,5-bisphosphate + CO2 + H2O. The enzyme catalyses D-ribulose 1,5-bisphosphate + O2 = 2-phosphoglycolate + (2R)-3-phosphoglycerate + 2 H(+). Functionally, ruBisCO catalyzes two reactions: the carboxylation of D-ribulose 1,5-bisphosphate, the primary event in carbon dioxide fixation, as well as the oxidative fragmentation of the pentose substrate in the photorespiration process. Both reactions occur simultaneously and in competition at the same active site. In Gloeobacter violaceus (strain ATCC 29082 / PCC 7421), this protein is Ribulose bisphosphate carboxylase large chain.